A 93-amino-acid polypeptide reads, in one-letter code: Putative regulatory protein Clos_1422 (93 aa).

This sequence belongs to the RemA family.

The chain is Putative regulatory protein Clos_1422 from Alkaliphilus oremlandii (strain OhILAs) (Clostridium oremlandii (strain OhILAs)).